Reading from the N-terminus, the 158-residue chain is 2-C-methyl-D-erythritol 2,4-cyclodiphosphate synthase (158 aa).

A divalent metal cation is bound by residues aspartate 9 and histidine 11. 4-CDP-2-C-methyl-D-erythritol 2-phosphate is bound by residues aspartate 9 to histidine 11 and histidine 35 to serine 36. Histidine 43 serves as a coordination point for a divalent metal cation. 4-CDP-2-C-methyl-D-erythritol 2-phosphate contacts are provided by residues aspartate 57–glycine 59, phenylalanine 62–aspartate 66, threonine 133–glutamate 136, phenylalanine 140, and arginine 143.

This sequence belongs to the IspF family. As to quaternary structure, homotrimer. A divalent metal cation is required as a cofactor.

The enzyme catalyses 4-CDP-2-C-methyl-D-erythritol 2-phosphate = 2-C-methyl-D-erythritol 2,4-cyclic diphosphate + CMP. The protein operates within isoprenoid biosynthesis; isopentenyl diphosphate biosynthesis via DXP pathway; isopentenyl diphosphate from 1-deoxy-D-xylulose 5-phosphate: step 4/6. Involved in the biosynthesis of isopentenyl diphosphate (IPP) and dimethylallyl diphosphate (DMAPP), two major building blocks of isoprenoid compounds. Catalyzes the conversion of 4-diphosphocytidyl-2-C-methyl-D-erythritol 2-phosphate (CDP-ME2P) to 2-C-methyl-D-erythritol 2,4-cyclodiphosphate (ME-CPP) with a corresponding release of cytidine 5-monophosphate (CMP). The polypeptide is 2-C-methyl-D-erythritol 2,4-cyclodiphosphate synthase (Methylococcus capsulatus (strain ATCC 33009 / NCIMB 11132 / Bath)).